Reading from the N-terminus, the 388-residue chain is Norsolorinic acid reductase (388 aa).

The active-site Proton donor is Tyr-74. 233-243 lines the NADP(+) pocket; the sequence is GVLGRGQFRSA.

This sequence belongs to the aldo/keto reductase family. Aldo/keto reductase 2 subfamily.

The protein operates within mycotoxin biosynthesis; aflatoxin biosynthesis. This Aspergillus flavus (strain ATCC 200026 / FGSC A1120 / IAM 13836 / NRRL 3357 / JCM 12722 / SRRC 167) protein is Norsolorinic acid reductase (norA).